The following is a 577-amino-acid chain: MDLASKKNTANVGSKEIDPIKPKSPRSSLSPFSLKLGDNVPRNPHFDPKKMDPLVKHQPPKSLEPPPSTRGTNSEGDLKHNTYSSDGDSLAMRKNAPKNLHYDPKKIVPLTTSETYSPSARNHHHHRTKSPDKKRAPRHNGDYAYGDNLVGPSAQPFKPHTGGDVRWDAINSIASKGPQIGLDNFRLLKRLGYGDIGSVYLADLRGTNAVFAMKVMDKASLASRNKLLRAQTEREILSLLDHPFLPTLYSYFETDKFYCLVMEFCSGGNLHSLRQKQPSRRFTEEAARFYASEVLLALEYLHMLGVVYRDLKPENILVRDEGHIMLSDFDLSLRCTFNPTLVKSSSVCSGGGAILNEEFAVNGCMHPSAFLPRLLPSKKTRKAKSDSGLGGLSMPELMAEPTDVRSMSFVGTHEYLAPEIIRGEGHGSAVDWWTFGIFLYELLHGTTPFKGQGNRATLHNVVGQPLKFPDTPHVSSAARDLIRGLLVKDPHRRIAYTRGATEIKQHPFFEGVNWALVRSAAPPHIPDPVDLGPYAAARGKTKSHGGGDHCNSMKPEPLVACAAGPTDDTAYIDFEYF.

Residues 1–12 are compositionally biased toward polar residues; sequence MDLASKKNTANV. A disordered region spans residues 1 to 151; that stretch reads MDLASKKNTA…DYAYGDNLVG (151 aa). The segment covering 44-55 has biased composition (basic and acidic residues); sequence PHFDPKKMDPLV. 2 stretches are compositionally biased toward polar residues: residues 69 to 87 and 110 to 120; these read TRGTNSEGDLKHNTYSSDG and LTTSETYSPSA. Residues 185-509 enclose the Protein kinase domain; the sequence is FRLLKRLGYG…ATEIKQHPFF (325 aa). ATP-binding positions include 191–199 and Lys-214; that span reads LGYGDIGSV. Asp-310 functions as the Proton acceptor in the catalytic mechanism. One can recognise an AGC-kinase C-terminal domain in the interval 510–577; the sequence is EGVNWALVRS…DTAYIDFEYF (68 aa).

This sequence belongs to the protein kinase superfamily. AGC Ser/Thr protein kinase family. Interacts with PDPK1/PDK1. In terms of processing, autophosphorylated and phosphorylated by PDPK1/PDK1. In terms of tissue distribution, specifically expressed in pollen grains.

It catalyses the reaction L-seryl-[protein] + ATP = O-phospho-L-seryl-[protein] + ADP + H(+). The enzyme catalyses L-threonyl-[protein] + ATP = O-phospho-L-threonyl-[protein] + ADP + H(+). Its activity is regulated as follows. Activated by PDPK1/PDK1. Functionally, functions redudantly with AGC1-7 as signaling component in the pollen tube. Required for polarized growth of pollen tubes. The polypeptide is Serine/threonine-protein kinase AGC1-5 (Arabidopsis thaliana (Mouse-ear cress)).